Reading from the N-terminus, the 965-residue chain is Collagen alpha-1(I) chain (965 aa).

The span at 1–21 (SVPGPMGPSGPRGLPGPPGPG) shows a compositional bias: pro residues. Residues 1-965 (SVPGPMGPSG…PGPPGPPGPP (965 aa)) are disordered. Residues Pro15, Pro18, Pro20, Pro29, Pro32, Pro35, Pro49, Pro64, Pro70, Pro79, and Pro85 each carry the 4-hydroxyproline modification. The segment covering 52–66 (NGDDGEAGKPGRPGE) has biased composition (basic and acidic residues). Lys88 bears the 5-hydroxylysine; alternate mark. The O-linked (Gal...) hydroxylysine; alternate glycan is linked to Lys88. Ser94 bears the Phosphoserine mark. Over residues 102-118 (DAGPAGPKGEPGSPGEN) the composition is skewed to low complexity. 16 positions are modified to 4-hydroxyproline: Pro112, Pro115, Pro121, Pro130, Pro136, Pro157, Pro166, Pro169, Pro196, Pro199, Pro211, Pro217, Pro226, Pro232, Pro235, and Pro250. Low complexity predominate over residues 136 to 154 (PGASGPAGARGNDGATGAA). Positions 156–168 (PPGPTGPAGPPGF) are enriched in pro residues. The segment covering 202–241 (AGAAGPAGNPGADGQPGAKGANGAPGIAGAPGFPGARGPS) has biased composition (low complexity). Residue Lys253 is modified to 5-hydroxylysine. Residues Pro259, Pro262, Pro273, Pro282, Pro297, Pro303, Pro312, and Pro318 each carry the 4-hydroxyproline modification. A compositionally biased stretch (gly residues) spans 307 to 327 (GERGGPGSRGFPGADGAGPKG). The residue at position 326 (Lys326) is a 5-hydroxylysine. Pro335, Pro344, Pro350, Pro356, Pro365, Pro368, Pro377, Pro386, Pro392, Pro404, Pro413, Pro422, Pro425, Pro443, Pro460, Pro466, Pro472, Pro480, Pro492, Pro501, Pro509, Pro515, and Pro524 each carry 4-hydroxyproline. Positions 359-385 (KGLTGSPGSPGPDGKTGPPGPAGQDGR) are enriched in low complexity. Residues 394 to 413 (ARGQAGVMGFPGPKGAAGEP) are compositionally biased toward low complexity. Low complexity predominate over residues 472–482 (PGEADLGAPGP). At Lys536 the chain carries 5-hydroxylysine. 4-hydroxyproline is present on residues Pro542, Pro557, and Pro563. Residues 569-583 (SGPSGPAGPTGARGA) show a composition bias toward low complexity. Ser572 carries the phosphoserine modification. Residues Pro584, Pro590, Pro593, Pro602, Pro608, Pro626, Pro635, and Pro644 each carry the 4-hydroxyproline modification. The segment covering 596–623 (AGFAGPPGADGQPGAKGEPGDAGAKGDA) has biased composition (low complexity). Residues 625 to 637 (PPGPAGPTGPPGP) show a composition bias toward pro residues. 5-hydroxylysine is present on Lys647. Over residues 652 to 668 (SAGPPGATGFPGAAGRV) the composition is skewed to low complexity. 4-hydroxyproline is present on residues Pro656 and Pro662. Pro670 is subject to 3-hydroxyproline. 4-hydroxyproline occurs at positions 671, 680, 683, 704, 713, 721, 730, 748, 757, 760, 766, 771, 777, 783, 791, and 797. Residues 697 to 706 (ETGPAGRPGE) show a composition bias toward low complexity. The span at 718 to 730 (KGSPGADGPAGAP) shows a compositional bias: low complexity. Residues 768–780 (KGPPGPMGPPGLA) show a composition bias toward pro residues. Lys806 bears the 5-hydroxylysine mark. Pro residues predominate over residues 815-830 (SGPPGAPGAPGAPGPV). 3 positions are modified to 4-hydroxyproline: Pro818, Pro821, and Pro824. Positions 851–865 (AGPAGARGPAGPQGP) are enriched in low complexity. The span at 866–880 (RGDKGETGEQGDRGI) shows a compositional bias: basic and acidic residues. Position 869 is a 5-hydroxylysine (Lys869). Position 881 is a 5-hydroxylysine; alternate (Lys881). Lys881 carries O-linked (Gal...) hydroxylysine; alternate glycosylation. A 4-hydroxyproline mark is found at Pro896, Pro899, Pro917, and Pro932. The segment covering 899–932 (PGEQGPSGASGPAGPRGPPGSAGSPGKDGLNGLP) has biased composition (low complexity). Position 937 is a 3-hydroxyproline (Pro937). Pro938 carries the post-translational modification 4-hydroxyproline. Pro residues predominate over residues 950-965 (VGPPGPPGPPGPPGPP). Pro952 is modified (3-hydroxyproline). 4-hydroxyproline is present on Pro953. Pro955 bears the 3-hydroxyproline mark. A 4-hydroxyproline modification is found at Pro956. Residue Pro958 is modified to 3-hydroxyproline. 4-hydroxyproline is present on residues Pro959, Pro962, and Pro965.

Belongs to the fibrillar collagen family. As to quaternary structure, trimers of one alpha 2(I) and two alpha 1(I) chains. Post-translationally, contains mostly 4-hydroxyproline. Proline residues at the third position of the tripeptide repeating unit (G-X-Y) are hydroxylated in some or all of the chains. Contains 3-hydroxyproline at a few sites. This modification occurs on the first proline residue in the sequence motif Gly-Pro-Hyp, where Hyp is 4-hydroxyproline. In terms of processing, lysine residues at the third position of the tripeptide repeating unit (G-X-Y) are 5-hydroxylated in some or all of the chains. Post-translationally, O-glycosylated on hydroxylated lysine residues. The O-linked glycan consists of a Glc-Gal disaccharide. In terms of tissue distribution, expressed in bones.

Its subcellular location is the secreted. The protein resides in the extracellular space. It is found in the extracellular matrix. Type I collagen is a member of group I collagen (fibrillar forming collagen). In Scelidotherium sp. (strain SLP-2019) (South American ground sloth), this protein is Collagen alpha-1(I) chain.